A 536-amino-acid chain; its full sequence is Light-independent protochlorophyllide reductase subunit B (536 aa).

Position 36 (D36) interacts with [4Fe-4S] cluster. D292 serves as the catalytic Proton donor. 427–428 (GL) lines the substrate pocket. Residues 447–489 (QSHLGHLGGHQSQTEQQQSQAATNPSTQSNTDSSSEESPLWTP) are disordered. Low complexity predominate over residues 448-469 (SHLGHLGGHQSQTEQQQSQAAT). The segment covering 470–483 (NPSTQSNTDSSSEE) has biased composition (polar residues).

It belongs to the ChlB/BchB/BchZ family. In terms of assembly, protochlorophyllide reductase is composed of three subunits; ChlL, ChlN and ChlB. Forms a heterotetramer of two ChlB and two ChlN subunits. It depends on [4Fe-4S] cluster as a cofactor.

The catalysed reaction is chlorophyllide a + oxidized 2[4Fe-4S]-[ferredoxin] + 2 ADP + 2 phosphate = protochlorophyllide a + reduced 2[4Fe-4S]-[ferredoxin] + 2 ATP + 2 H2O. It participates in porphyrin-containing compound metabolism; chlorophyll biosynthesis (light-independent). Functionally, component of the dark-operative protochlorophyllide reductase (DPOR) that uses Mg-ATP and reduced ferredoxin to reduce ring D of protochlorophyllide (Pchlide) to form chlorophyllide a (Chlide). This reaction is light-independent. The NB-protein (ChlN-ChlB) is the catalytic component of the complex. The chain is Light-independent protochlorophyllide reductase subunit B from Prochlorococcus marinus (strain MIT 9303).